The chain runs to 886 residues: Coatomer subunit gamma (886 aa).

5 HEAT repeats span residues 66-103 (VEAT…SSDE), 288-325 (RELT…THPM), 327-359 (VTNC…TGNE), 360-397 (SSVE…KFPL), and 472-509 (SDPS…MVES). The segment at 592-613 (SQPLAEKKAQGKKPTGLGAPPA) is disordered.

This sequence belongs to the COPG family. In terms of assembly, oligomeric complex that consists of at least the alpha, beta, beta', gamma, delta, epsilon and zeta subunits.

Its subcellular location is the cytoplasm. It localises to the golgi apparatus membrane. The protein localises to the cytoplasmic vesicle. It is found in the COPI-coated vesicle membrane. Its function is as follows. The coatomer is a cytosolic protein complex that binds to dilysine motifs and reversibly associates with Golgi non-clathrin-coated vesicles, which further mediate biosynthetic protein transport from the ER, via the Golgi up to the trans Golgi network. Coatomer complex is required for budding from Golgi membranes, and is essential for the retrograde Golgi-to-ER transport of dilysine-tagged proteins. The polypeptide is Coatomer subunit gamma (Arabidopsis thaliana (Mouse-ear cress)).